The primary structure comprises 237 residues: NAD(P)H-hydrate epimerase (237 aa).

The region spanning 11–223 (AASLDRDLMN…GLDIPEYPGV (213 aa)) is the YjeF N-terminal domain. 61 to 65 (NNGGD) serves as a coordination point for (6S)-NADPHX. Positions 62 and 123 each coordinate K(+). Residues 127 to 133 (GFSFSGP) and aspartate 156 each bind (6S)-NADPHX. Serine 159 is a binding site for K(+).

It belongs to the NnrE/AIBP family. K(+) serves as cofactor.

The protein localises to the cytoplasm. It is found in the mitochondrion. The enzyme catalyses (6R)-NADHX = (6S)-NADHX. The catalysed reaction is (6R)-NADPHX = (6S)-NADPHX. Its function is as follows. Catalyzes the epimerization of the S- and R-forms of NAD(P)HX, a damaged form of NAD(P)H that is a result of enzymatic or heat-dependent hydration. This is a prerequisite for the S-specific NAD(P)H-hydrate dehydratase to allow the repair of both epimers of NAD(P)HX. This Ajellomyces capsulatus (strain G186AR / H82 / ATCC MYA-2454 / RMSCC 2432) (Darling's disease fungus) protein is NAD(P)H-hydrate epimerase.